Consider the following 957-residue polypeptide: Thioredoxin domain-containing protein 11 (957 aa).

Residues 1-13 show a composition bias toward gly residues; sequence MSECGGRGGGGGS. The interval 1–47 is disordered; that stretch reads MSECGGRGGGGGSSSSSDDAEDEGGGGGPAGSGSLSPAPAASSEGRL. Residues 32–44 are compositionally biased toward low complexity; that stretch reads SGSLSPAPAASSE. Residues 64–84 traverse the membrane as a helical segment; the sequence is LLCGAVALGCALLLALKFTCS. The Thioredoxin 1 domain maps to 91–213; that stretch reads IPAKPPVSFF…IEKFVRRVMK (123 aa). Disulfide bonds link C441–C444 and C691–C694. Positions 621–771 constitute a Thioredoxin 2 domain; the sequence is LDPKQALMKF…LLRFILHHSD (151 aa). A coiled-coil region spans residues 785-889; it reads AECLQNEAVL…ADASETLLTE (105 aa). The segment covering 904–925 has biased composition (basic and acidic residues); the sequence is LEGRDGADDRVPPSKARSEHPE. Positions 904–957 are disordered; that stretch reads LEGRDGADDRVPPSKARSEHPEPPGAPRLPASTPLPANISSTLASEGSPENRTD. Residues 941–951 are compositionally biased toward polar residues; it reads NISSTLASEGS.

This sequence belongs to the protein disulfide isomerase family. Interacts with the cytoplasmic part of DUOX1 and DUOX2. Interacts with TPO and CYBA.

The protein resides in the endoplasmic reticulum membrane. In terms of biological role, may act as a redox regulator involved in DUOX proteins folding. The interaction with DUOX1 and DUOX2 suggest that it belongs to a multiprotein complex constituting the thyroid H(2)O(2) generating system. It is however not sufficient to assist DUOX1 and DUOX2 in H(2)O(2) generation. In Bos taurus (Bovine), this protein is Thioredoxin domain-containing protein 11 (TXNDC11).